A 330-amino-acid polypeptide reads, in one-letter code: Ig gamma-2A chain C region, A allele (330 aa).

3 Ig-like domains span residues 6–98 (PSVY…KKIE), 121–220 (PSVF…RTIS), and 229–325 (PQVY…KSFS). 3 cysteine pairs are disulfide-bonded: C27–C82, C144–C204, and C250–C308. N180 is a glycosylation site (N-linked (GlcNAc...) asparagine).

The polypeptide is Ig gamma-2A chain C region, A allele (Ighg) (Mus musculus (Mouse)).